A 364-amino-acid chain; its full sequence is MDFFYIGVMSGSSLDGIDIALLKQDDRSRLLATHYIPMPEDLHAELLGLCSSGVDELARAAIAEQKWCRLVAQGVQTLLEDQNMVPAQIRAIGSHGQTIRHEPARGYSIQIGNPALLAELTEITVVSDFRRRDIAAGGQGAPLVPAFHEALFDDNKDHRAVLNIGGFSNLSLIESDRPVEGFDCGPGNVLLDAWIQSQRHESYDKDGEWAASGEVDQALLQKLLSDQFFLTKGPKSTGREVFNLGWVHHHLFQLPTLTPEDVQATLLELTALTITESLQSAQAITKELLVCGGGAHNKALMKRLAELLPDTEVSSTEKFGVDPDWVEAMAFAWLAHCCLEGVPANRPTVTGAKGRRVLGAIYPA.

Residue glycine 11–aspartate 18 coordinates ATP.

The protein belongs to the anhydro-N-acetylmuramic acid kinase family.

It catalyses the reaction 1,6-anhydro-N-acetyl-beta-muramate + ATP + H2O = N-acetyl-D-muramate 6-phosphate + ADP + H(+). The protein operates within amino-sugar metabolism; 1,6-anhydro-N-acetylmuramate degradation. It participates in cell wall biogenesis; peptidoglycan recycling. In terms of biological role, catalyzes the specific phosphorylation of 1,6-anhydro-N-acetylmuramic acid (anhMurNAc) with the simultaneous cleavage of the 1,6-anhydro ring, generating MurNAc-6-P. Is required for the utilization of anhMurNAc either imported from the medium or derived from its own cell wall murein, and thus plays a role in cell wall recycling. The protein is Anhydro-N-acetylmuramic acid kinase of Pseudomonas savastanoi pv. phaseolicola (strain 1448A / Race 6) (Pseudomonas syringae pv. phaseolicola (strain 1448A / Race 6)).